Here is a 560-residue protein sequence, read N- to C-terminus: MGLNLNPILRQELANLDKDTESRKSAMKALKSYVKDLDSKAIPGFLAQVFETKETNSLSGEYTISLYEILARVHGPNIVPQIDTIMSTIVKTLASSAGSFPLQQACSKVIPAIARYGIDPTTTEDKKRVIIHSLCKPLTDSLLASQESLTSGAALCLKALVDSDNWRFASDEMVNRVCQNVVVALDSNSNQTHLQMGLVMSLAKHNPLIVEAYARLLIHTGLRILGFGVSEGNSQKRLSAVQMLNFLMKCLDPRSIYSEVELIIKEMERCQSDQMAYVRGAAYEAMMTSKRIAAELESKMEKGCRSVTGSNFSRRNCSSIVPDYSLSPESQTLGSFSGYDSPVESSPISHTSCNSEFDRRSVNRKLWRRDENGGVVDISLKDGLFSRVTKGSTTVSDSPLVPYDTCENGDEFEGFLMESLRNTTPSPQRQRSRRINAEDFNIFSTPRKLISSLQYPDDVDLDHSDIQSPILRGEREKTIGSRKNPKLRKQFPTMVETMSSTITVSEDTAQTQMITGKKKKKKMSYAKLVIAISFVVVALFATVILMVNQDDDVGYYTVPT.

At G2 the chain carries N-acetylglycine. The segment at 7–287 is ARMADILLO-type fold; sequence PILRQELANL…VRGAAYEAMM (281 aa). In terms of domain architecture, KASH spans 517-560; it reads KKKKKKMSYAKLVIAISFVVVALFATVILMVNQDDDVGYYTVPT. The helical transmembrane segment at 528-548 threads the bilayer; that stretch reads LVIAISFVVVALFATVILMVN. Residues 557-560 carry the Required for nuclear localization motif; it reads TVPT.

As to quaternary structure, interacts with SUN1 and SUN2. Binds to F-actin. As to expression, preferentially expressed in guards cells, but also detected in root cells.

It is found in the nucleus membrane. Functionally, plays a role in nucleus positioning in guard cells. This is Protein SINE1 from Arabidopsis thaliana (Mouse-ear cress).